A 151-amino-acid chain; its full sequence is UPF0178 protein PSHAb0045 (151 aa).

Belongs to the UPF0178 family.

The sequence is that of UPF0178 protein PSHAb0045 from Pseudoalteromonas translucida (strain TAC 125).